The primary structure comprises 458 residues: Protein TESPA1 (458 aa).

Phosphoserine is present on serine 312. Positions lysine 328–leucine 339 are enriched in basic and acidic residues. Disordered stretches follow at residues lysine 328–serine 356 and leucine 439–leucine 458. Polar residues-rich tracts occupy residues proline 346 to serine 356 and leucine 439 to glutamine 450.

Interacts with PLCG1 and GRB2; the association is increased with prolonged stimulation of the TCR and may facilitate the assembly of the LAT signalosome. Interacts with ITPR1 and ITPR3. Interacts with HSPA9. In terms of processing, may be phosphorylated in response to store-operated Ca(+2) entry. In terms of tissue distribution, expressed in lymphoid tissues, with highest expression levels detected in thymus and lower levels in spleen and lymph nodes (at protein level). Detected in CD4(+) and CD8(+) T-cells, B-cells and mast cells. Not detected in monocytes/macrophages.

It is found in the cytoplasm. The protein localises to the endoplasmic reticulum membrane. Functionally, may play a role in the regulation of inositol 1,4,5-trisphosphate receptor-mediated Ca(2+) release and mitochondrial Ca(2+) uptake via the mitochondria-associated endoplasmic reticulum membrane (MAM) compartment. Required for the development and maturation of T-cells, its function being essential for the late stages of thymocyte development. Plays a role in T-cell antigen receptor (TCR)-mediated activation of the ERK and NFAT signaling pathways, possibly by serving as a scaffolding protein that promotes the assembly of the LAT signalosome in thymocytes. The chain is Protein TESPA1 (Tespa1) from Mus musculus (Mouse).